The sequence spans 574 residues: Regulatory protein NPR4 (574 aa).

The interval 1-21 (MAATAIEPSSSISFTSSHLSN) is disordered. A compositionally biased stretch (low complexity) spans 9–20 (SSSISFTSSHLS). At S11 the chain carries Phosphoserine. Positions 54 to 130 (TDAEIIIEEE…IYTGRLKPFP (77 aa)) constitute a BTB domain. The segment at 133–147 (VSTCVDSVCAHDSCK) adopts a C2HC NPR-type zinc-finger fold. Zn(2+)-binding residues include C136, C141, H143, and C146. 3 ANK repeats span residues 252–280 (ERTG…DITL), 281–311 (DQAN…DVNF), and 315–344 (RGYT…NASD). The tract at residues 373–516 (EPSKYRLCID…MDQYMDEEIP (144 aa)) is salicylic acid-binding core (SBC). R419 lines the salicylate pocket. The interval 521–574 (PEKGTVKERRQKRMRYNELKNDVKKAYSKDKVARSCLSSSSPASSLREALENPT) is disordered. Over residues 535-553 (RYNELKNDVKKAYSKDKVA) the composition is skewed to basic and acidic residues. Residues 554–567 (RSCLSSSSPASSLR) are compositionally biased toward low complexity.

Belongs to the plant 'ANKYRIN-BTB/POZ' family. 'NPR1-like' subfamily. As to quaternary structure, forms homodimers, homotetramers and heterodimers with NPR3 in the presence of salicylic acid (SA). Interacts with TGA2, TGA3, TGA5, TGA6 and TGA7. Interacts with CUL3A, a core component of the cullin-RING ubiquitin ligases (CRL). Binds to NPR1; this interaction is disrupted by association with SA, probably due to conformational changes.

It is found in the nucleus. It functions in the pathway protein modification; protein ubiquitination. Its function is as follows. Salicylic acid (SA)-binding substrate-specific adapter of an E3 ubiquitin-protein ligase complex (CUL3-RBX1-BTB) which mediates the ubiquitination and subsequent proteasomal degradation of NPR1 in the absence of SA. Together with NPR3, acts as receptor of salicylic acid to monitor immunity in a NPR1-dependent manner and induce systemic acquired resistance (SAR). Involved in the regulation of basal defense responses against pathogens, and may be implicated in the cross-talk between the SA- and JA-dependent signaling pathways. This chain is Regulatory protein NPR4, found in Arabidopsis thaliana (Mouse-ear cress).